The chain runs to 100 residues: NADH-quinone oxidoreductase subunit K (100 aa).

Helical transmembrane passes span 4–24 (LQHGLILAAVLFVLGFTCLVL), 28–48 (LLFMLIGLEIMINSAALAFVV), and 60–80 (IMYILAISLAAAEASIGLALL).

Belongs to the complex I subunit 4L family. In terms of assembly, NDH-1 is composed of 13 different subunits. Subunits NuoA, H, J, K, L, M, N constitute the membrane sector of the complex.

The protein localises to the cell inner membrane. The enzyme catalyses a quinone + NADH + 5 H(+)(in) = a quinol + NAD(+) + 4 H(+)(out). Its function is as follows. NDH-1 shuttles electrons from NADH, via FMN and iron-sulfur (Fe-S) centers, to quinones in the respiratory chain. The immediate electron acceptor for the enzyme in this species is believed to be ubiquinone. Couples the redox reaction to proton translocation (for every two electrons transferred, four hydrogen ions are translocated across the cytoplasmic membrane), and thus conserves the redox energy in a proton gradient. The chain is NADH-quinone oxidoreductase subunit K from Proteus mirabilis (strain HI4320).